We begin with the raw amino-acid sequence, 959 residues long: Isoleucine--tRNA ligase (959 aa).

A 'HIGH' region motif is present at residues 66–76 (PYANGDLHIGH). Residue E592 participates in L-isoleucyl-5'-AMP binding. The 'KMSKS' region motif lies at 633–637 (KMSKS). ATP is bound at residue K636. Residues C922, C925, C942, and C945 each coordinate Zn(2+).

It belongs to the class-I aminoacyl-tRNA synthetase family. IleS type 1 subfamily. In terms of assembly, monomer. It depends on Zn(2+) as a cofactor.

It localises to the cytoplasm. It catalyses the reaction tRNA(Ile) + L-isoleucine + ATP = L-isoleucyl-tRNA(Ile) + AMP + diphosphate. Its function is as follows. Catalyzes the attachment of isoleucine to tRNA(Ile). As IleRS can inadvertently accommodate and process structurally similar amino acids such as valine, to avoid such errors it has two additional distinct tRNA(Ile)-dependent editing activities. One activity is designated as 'pretransfer' editing and involves the hydrolysis of activated Val-AMP. The other activity is designated 'posttransfer' editing and involves deacylation of mischarged Val-tRNA(Ile). This is Isoleucine--tRNA ligase from Ralstonia pickettii (strain 12J).